The sequence spans 288 residues: Allergen Asp f 7 homolog (288 aa).

Positions 1–20 (MAPQFLKALTVATALGATLA) are cleaved as a signal peptide. Low complexity-rich tracts occupy residues 48-107 (TVHG…SSSV) and 117-129 (TTSTPAPEPTTST). The disordered stretch occupies residues 48–161 (TVHGTPGPDY…PPVVSIPPIG (114 aa)). A compositionally biased stretch (pro residues) spans 130-151 (TPPPPPPAMTTPPPPPPPPATK). Asn268 is a glycosylation site (N-linked (GlcNAc...) asparagine).

It is found in the secreted. The protein is Allergen Asp f 7 homolog of Arthroderma benhamiae (strain ATCC MYA-4681 / CBS 112371) (Trichophyton mentagrophytes).